The chain runs to 295 residues: 33 kDa chaperonin (295 aa).

Intrachain disulfides connect cysteine 237–cysteine 239 and cysteine 270–cysteine 273.

It belongs to the HSP33 family. In terms of processing, under oxidizing conditions two disulfide bonds are formed involving the reactive cysteines. Under reducing conditions zinc is bound to the reactive cysteines and the protein is inactive.

It localises to the cytoplasm. Functionally, redox regulated molecular chaperone. Protects both thermally unfolding and oxidatively damaged proteins from irreversible aggregation. Plays an important role in the bacterial defense system toward oxidative stress. The chain is 33 kDa chaperonin from Lactiplantibacillus plantarum (strain ATCC BAA-793 / NCIMB 8826 / WCFS1) (Lactobacillus plantarum).